Reading from the N-terminus, the 229-residue chain is Ribonuclease HII (229 aa).

The RNase H type-2 domain maps to 42-229 (TRIAGVDEVG…KPVHKILYQE (188 aa)). A divalent metal cation-binding residues include Asp-48, Glu-49, and Asp-139.

It belongs to the RNase HII family. The cofactor is Mn(2+). It depends on Mg(2+) as a cofactor.

It localises to the cytoplasm. It carries out the reaction Endonucleolytic cleavage to 5'-phosphomonoester.. Its function is as follows. Endonuclease that specifically degrades the RNA of RNA-DNA hybrids. This is Ribonuclease HII from Ruegeria sp. (strain TM1040) (Silicibacter sp.).